We begin with the raw amino-acid sequence, 342 residues long: Arrestin domain-containing protein 5 (342 aa).

The protein belongs to the arrestin family. Testis-enriched.

Its subcellular location is the membrane. In terms of biological role, plays an essential role in spermatogenesis. May be involved in the anchoring of the sperm head to the tail during spermatogenesis by affecting SEC22A-mediated SUN5 and NDC1 transport and localization. This is Arrestin domain-containing protein 5 (ARRDC5) from Homo sapiens (Human).